We begin with the raw amino-acid sequence, 337 residues long: UDP-3-O-acylglucosamine N-acyltransferase (337 aa).

Catalysis depends on H238, which acts as the Proton acceptor.

It belongs to the transferase hexapeptide repeat family. LpxD subfamily. As to quaternary structure, homotrimer.

The catalysed reaction is a UDP-3-O-[(3R)-3-hydroxyacyl]-alpha-D-glucosamine + a (3R)-hydroxyacyl-[ACP] = a UDP-2-N,3-O-bis[(3R)-3-hydroxyacyl]-alpha-D-glucosamine + holo-[ACP] + H(+). It participates in bacterial outer membrane biogenesis; LPS lipid A biosynthesis. Catalyzes the N-acylation of UDP-3-O-acylglucosamine using 3-hydroxyacyl-ACP as the acyl donor. Is involved in the biosynthesis of lipid A, a phosphorylated glycolipid that anchors the lipopolysaccharide to the outer membrane of the cell. The polypeptide is UDP-3-O-acylglucosamine N-acyltransferase (Xanthomonas euvesicatoria pv. vesicatoria (strain 85-10) (Xanthomonas campestris pv. vesicatoria)).